Consider the following 118-residue polypeptide: DPLYTKFVSLVKSDPVIHTLLPLSPKGEICDINGVCVDAAEDEFFRLTTKEGKLTVERDVVRTKTTDYSPILQFEQDPVQILDALLPLYLNSQILRALQESLASELAARMSAMSNAAA.

A disulfide bridge links cysteine 30 with cysteine 36.

Belongs to the ATPase gamma chain family. As to quaternary structure, F-type ATPases have 2 components, CF(1) - the catalytic core - and CF(0) - the membrane proton channel. CF(1) has five subunits: alpha(3), beta(3), gamma(1), delta(1), epsilon(1). CF(0) has four main subunits: a, b, b' and c.

The protein localises to the plastid. The protein resides in the chloroplast thylakoid membrane. Its function is as follows. Produces ATP from ADP in the presence of a proton gradient across the membrane. The gamma chain is believed to be important in regulating ATPase activity and the flow of protons through the CF(0) complex. In terms of biological role, inceptin is a proteolytic fragment produced by insect larvae that previously ingested the protein. This peptide mediate plant perception of herbivory through the induction of volatile, phenylpropanoid and protease inhibitor defenses such as ethylene, jasmonic acid and salicylic acid for example. The protein is ATP synthase subunit gamma, chloroplastic of Vigna unguiculata (Cowpea).